We begin with the raw amino-acid sequence, 303 residues long: Glycine--tRNA ligase alpha subunit (303 aa).

The protein belongs to the class-II aminoacyl-tRNA synthetase family. As to quaternary structure, tetramer of two alpha and two beta subunits.

It localises to the cytoplasm. The catalysed reaction is tRNA(Gly) + glycine + ATP = glycyl-tRNA(Gly) + AMP + diphosphate. In Stenotrophomonas maltophilia (strain R551-3), this protein is Glycine--tRNA ligase alpha subunit.